Reading from the N-terminus, the 154-residue chain is Protein X (154 aa).

The segment at 68–117 is mitochondrial targeting sequence; that stretch reads PCALRFTSARRMETTVNAHGNLPKVLHKRTLGLSAMSTTDLEAYFKDCVF.

Belongs to the orthohepadnavirus protein X family. In terms of assembly, may form homodimer. May interact with host CEBPA, CFLAR, CREB1, DDB1, E4F1, HBXIP, HSPD1/HSP60, NFKBIA, POLR2E and SMAD4. Interacts with host SMC5-SMC6 complex and induces its degradation. Interacts with host TRPC4AP; leading to prevent ubiquitination of TRPC4AP. Interacts with host PLSCR1; this interaction promotes ubiquitination and degradation of HBx and impairs HBx-mediated cell proliferation. In terms of processing, a fraction may be phosphorylated in insect cells and HepG2 cells, a human hepatoblastoma cell line. Phosphorylated in vitro by host protein kinase C or mitogen-activated protein kinase. N-acetylated in insect cells.

The protein localises to the host cytoplasm. The protein resides in the host nucleus. It localises to the host mitochondrion. Functionally, multifunctional protein that plays a role in silencing host antiviral defenses and promoting viral transcription. Does not seem to be essential for HBV infection. May be directly involved in development of cirrhosis and liver cancer (hepatocellular carcinoma). Most of cytosolic activities involve modulation of cytosolic calcium. The effect on apoptosis is controversial depending on the cell types in which the studies have been conducted. May induce apoptosis by localizing in mitochondria and causing loss of mitochondrial membrane potential. May also modulate apoptosis by binding host CFLAR, a key regulator of the death-inducing signaling complex (DISC). Promotes viral transcription by using the host E3 ubiquitin ligase DDB1 to target the SMC5-SMC6 complex to proteasomal degradation. This host complex would otherwise bind to viral episomal DNA, and prevents its transcription. Moderately stimulates transcription of many different viral and cellular transcription elements. Promoters and enhancers stimulated by HBx contain DNA binding sites for NF-kappa-B, AP-1, AP-2, c-EBP, ATF/CREB, or the calcium-activated factor NF-AT. The protein is Protein X of Hepatitis B virus genotype B/C subtype adw (isolate Okinawa/pODW282/1998) (HBV-B).